Reading from the N-terminus, the 108-residue chain is ATP synthase peripheral stalk subunit F6, mitochondrial (108 aa).

Residues 1–32 (MILQRLFRFSSIIRSAVSVHFRRNIGVTAVAF) constitute a mitochondrion transit peptide. N6-acetyllysine is present on residues Lys-41, Lys-46, and Lys-79. An N6-acetyllysine; alternate mark is found at Lys-84, Lys-94, and Lys-99. 3 positions are modified to N6-succinyllysine; alternate: Lys-84, Lys-94, and Lys-99. Lys-105 is subject to N6-acetyllysine.

It belongs to the eukaryotic ATPase subunit F6 family. In terms of assembly, component of the ATP synthase complex composed at least of ATP5F1A/subunit alpha, ATP5F1B/subunit beta, ATP5MC1/subunit c (homooctomer), MT-ATP6/subunit a, MT-ATP8/subunit 8, ATP5ME/subunit e, ATP5MF/subunit f, ATP5MG/subunit g, ATP5MK/subunit k, ATP5MJ/subunit j, ATP5F1C/subunit gamma, ATP5F1D/subunit delta, ATP5F1E/subunit epsilon, ATP5PF/subunit F6, ATP5PB/subunit b, ATP5PD/subunit d, ATP5PO/subunit OSCP. ATP synthase complex consists of a soluble F(1) head domain (subunits alpha(3) and beta(3)) - the catalytic core - and a membrane F(0) domain - the membrane proton channel (subunits c, a, 8, e, f, g, k and j). These two domains are linked by a central stalk (subunits gamma, delta, and epsilon) rotating inside the F1 region and a stationary peripheral stalk (subunits F6, b, d, and OSCP).

It localises to the mitochondrion. The protein resides in the mitochondrion inner membrane. Functionally, subunit F6, of the mitochondrial membrane ATP synthase complex (F(1)F(0) ATP synthase or Complex V) that produces ATP from ADP in the presence of a proton gradient across the membrane which is generated by electron transport complexes of the respiratory chain. ATP synthase complex consist of a soluble F(1) head domain - the catalytic core - and a membrane F(1) domain - the membrane proton channel. These two domains are linked by a central stalk rotating inside the F(1) region and a stationary peripheral stalk. During catalysis, ATP synthesis in the catalytic domain of F(1) is coupled via a rotary mechanism of the central stalk subunits to proton translocation. In vivo, can only synthesize ATP although its ATP hydrolase activity can be activated artificially in vitro. Part of the complex F(0) domain. Part of the complex F(0) domain and the peripheric stalk, which acts as a stator to hold the catalytic alpha(3)beta(3) subcomplex and subunit a/ATP6 static relative to the rotary elements. This Macaca fascicularis (Crab-eating macaque) protein is ATP synthase peripheral stalk subunit F6, mitochondrial.